Reading from the N-terminus, the 315-residue chain is Prephenate dehydratase (315 aa).

Positions 3 to 190 (RIAYLGPQGT…ARTRFVLVGR (188 aa)) constitute a Prephenate dehydratase domain. An ACT domain is found at 204-281 (SVALRLPNTP…EDVRYLGSWP (78 aa)).

In terms of assembly, homodimer.

The enzyme catalyses prephenate + H(+) = 3-phenylpyruvate + CO2 + H2O. Its pathway is amino-acid biosynthesis; L-phenylalanine biosynthesis; phenylpyruvate from prephenate: step 1/1. This is Prephenate dehydratase (pheA) from Mycobacterium sp. (strain KMS).